Reading from the N-terminus, the 446-residue chain is D(1A) dopamine receptor (446 aa).

At 1-22 (MAPNTSTMDETGLPVERDFSFR) the chain is on the extracellular side. A glycan (N-linked (GlcNAc...) asparagine) is linked at N4. The helical transmembrane segment at 23–48 (ILTACFLSLLILSTLLGNTLVCAAVI) threads the bilayer. The Cytoplasmic segment spans residues 49–59 (RFRHLRSKVTN). A helical transmembrane segment spans residues 60–86 (FFVISLAVSDLLVAVLVMPWKAVAEIA). Residues 87–95 (GFWPFGSFC) are Extracellular-facing. A disulfide bridge connects residues C95 and C186. The chain crosses the membrane as a helical span at residues 96 to 118 (NIWVAFDIMCSTASILNLCVISV). The Cytoplasmic portion of the chain corresponds to 119–137 (DRYWAISSPFQYERKMTPK). Residues 138–162 (AAFILISVAWTLSVLISFIPVQLSW) traverse the membrane as a helical segment. Topologically, residues 163 to 192 (HKAKPTWPLDGNFTSLEDAEDDNCDTRLSR) are extracellular. Residues 193–218 (TYAISSSLISFYIPVAIMIVTYTSIY) traverse the membrane as a helical segment. Topologically, residues 219-272 (RIAQKQIRRISALERAAVHAKNCQTTTGNGNPVECSQSESSFKMSFKRETKVLK) are cytoplasmic. The helical transmembrane segment at 273-299 (TLSVIMGVFVCCWLPFFISNCMVPFCG) threads the bilayer. Residues 300-312 (SEETQPFCIDSIT) lie on the Extracellular side of the membrane. Residues 313–337 (FDVFVWFGWANSSLNPIIYAFNADF) form a helical membrane-spanning segment. Over 338-446 (QKAFSTLLGC…PVTHSGQHST (109 aa)) the chain is Cytoplasmic. Residues C347 and C351 are each lipidated (S-palmitoyl cysteine). S441 carries the phosphoserine modification.

Belongs to the G-protein coupled receptor 1 family. As to quaternary structure, interacts with DNAJC14 via its C-terminus. Interacts with DRD2. Interacts with DORIP1.

Its subcellular location is the cell membrane. It localises to the endoplasmic reticulum membrane. It is found in the cell projection. The protein localises to the cilium membrane. The protein resides in the dendrite. Its subcellular location is the dendritic spine. Its function is as follows. Dopamine receptor whose activity is mediated by G proteins which activate adenylyl cyclase. The chain is D(1A) dopamine receptor (Drd1) from Mus musculus (Mouse).